A 380-amino-acid polypeptide reads, in one-letter code: Ribosomal RNA large subunit methyltransferase G (380 aa).

Belongs to the methyltransferase superfamily. RlmG family.

The protein resides in the cytoplasm. The catalysed reaction is guanosine(1835) in 23S rRNA + S-adenosyl-L-methionine = N(2)-methylguanosine(1835) in 23S rRNA + S-adenosyl-L-homocysteine + H(+). In terms of biological role, specifically methylates the guanine in position 1835 (m2G1835) of 23S rRNA. The chain is Ribosomal RNA large subunit methyltransferase G from Streptomyces avermitilis (strain ATCC 31267 / DSM 46492 / JCM 5070 / NBRC 14893 / NCIMB 12804 / NRRL 8165 / MA-4680).